Here is a 397-residue protein sequence, read N- to C-terminus: CCA-adding enzyme (397 aa).

Positions 32 and 35 each coordinate ATP. CTP contacts are provided by G32 and R35. Mg(2+) is bound by residues D45 and D47. R116, D159, R162, R165, and R168 together coordinate ATP. R116, D159, R162, R165, and R168 together coordinate CTP.

This sequence belongs to the tRNA nucleotidyltransferase/poly(A) polymerase family. Bacterial CCA-adding enzyme type 3 subfamily. Homodimer. Mg(2+) is required as a cofactor.

The catalysed reaction is a tRNA precursor + 2 CTP + ATP = a tRNA with a 3' CCA end + 3 diphosphate. The enzyme catalyses a tRNA with a 3' CCA end + 2 CTP + ATP = a tRNA with a 3' CCACCA end + 3 diphosphate. In terms of biological role, catalyzes the addition and repair of the essential 3'-terminal CCA sequence in tRNAs without using a nucleic acid template. Adds these three nucleotides in the order of C, C, and A to the tRNA nucleotide-73, using CTP and ATP as substrates and producing inorganic pyrophosphate. tRNA 3'-terminal CCA addition is required both for tRNA processing and repair. Also involved in tRNA surveillance by mediating tandem CCA addition to generate a CCACCA at the 3' terminus of unstable tRNAs. While stable tRNAs receive only 3'-terminal CCA, unstable tRNAs are marked with CCACCA and rapidly degraded. The protein is CCA-adding enzyme of Latilactobacillus sakei subsp. sakei (strain 23K) (Lactobacillus sakei subsp. sakei).